Here is a 220-residue protein sequence, read N- to C-terminus: Peptide methionine sulfoxide reductase MsrA (220 aa).

The active site involves Cys54.

Belongs to the MsrA Met sulfoxide reductase family.

It carries out the reaction L-methionyl-[protein] + [thioredoxin]-disulfide + H2O = L-methionyl-(S)-S-oxide-[protein] + [thioredoxin]-dithiol. The enzyme catalyses [thioredoxin]-disulfide + L-methionine + H2O = L-methionine (S)-S-oxide + [thioredoxin]-dithiol. Its function is as follows. Has an important function as a repair enzyme for proteins that have been inactivated by oxidation. Catalyzes the reversible oxidation-reduction of methionine sulfoxide in proteins to methionine. In Salinispora tropica (strain ATCC BAA-916 / DSM 44818 / JCM 13857 / NBRC 105044 / CNB-440), this protein is Peptide methionine sulfoxide reductase MsrA.